We begin with the raw amino-acid sequence, 352 residues long: Lipase chaperone (352 aa).

The helical transmembrane segment at 7–28 threads the bilayer; it reads LSLVAVVVAGGLTLYWRWPAAV.

Belongs to the lipase chaperone family.

Its subcellular location is the cell inner membrane. In terms of biological role, may be involved in the folding of the extracellular lipase during its passage through the periplasm. This is Lipase chaperone (lifO) from Pseudomonas wisconsinensis.